The sequence spans 207 residues: Guanylate kinase (207 aa).

The Guanylate kinase-like domain maps to 5–184; it reads GNLFIVSAPS…ALADLKSIIF (180 aa). 12–19 provides a ligand contact to ATP; it reads APSGAGKS.

The protein belongs to the guanylate kinase family.

The protein localises to the cytoplasm. The catalysed reaction is GMP + ATP = GDP + ADP. Its function is as follows. Essential for recycling GMP and indirectly, cGMP. In Shewanella denitrificans (strain OS217 / ATCC BAA-1090 / DSM 15013), this protein is Guanylate kinase.